We begin with the raw amino-acid sequence, 444 residues long: Glutamate-1-semialdehyde 2,1-aminomutase (444 aa).

At K278 the chain carries N6-(pyridoxal phosphate)lysine.

This sequence belongs to the class-III pyridoxal-phosphate-dependent aminotransferase family. HemL subfamily. In terms of assembly, homodimer. Requires pyridoxal 5'-phosphate as cofactor.

It localises to the cytoplasm. It catalyses the reaction (S)-4-amino-5-oxopentanoate = 5-aminolevulinate. Its pathway is porphyrin-containing compound metabolism; protoporphyrin-IX biosynthesis; 5-aminolevulinate from L-glutamyl-tRNA(Glu): step 2/2. The chain is Glutamate-1-semialdehyde 2,1-aminomutase from Deinococcus radiodurans (strain ATCC 13939 / DSM 20539 / JCM 16871 / CCUG 27074 / LMG 4051 / NBRC 15346 / NCIMB 9279 / VKM B-1422 / R1).